We begin with the raw amino-acid sequence, 441 residues long: Glutamate--tRNA ligase 2 (441 aa).

Positions 6–16 (PSPTGDMHIGN) match the 'HIGH' region motif. The 'KMSKS' region motif lies at 231-235 (KMSKR). Position 234 (lysine 234) interacts with ATP.

Belongs to the class-I aminoacyl-tRNA synthetase family. Glutamate--tRNA ligase type 1 subfamily. In terms of assembly, monomer.

The protein localises to the cytoplasm. It catalyses the reaction tRNA(Glu) + L-glutamate + ATP = L-glutamyl-tRNA(Glu) + AMP + diphosphate. Functionally, catalyzes the attachment of glutamate to tRNA(Glu) in a two-step reaction: glutamate is first activated by ATP to form Glu-AMP and then transferred to the acceptor end of tRNA(Glu). This is Glutamate--tRNA ligase 2 from Helicobacter hepaticus (strain ATCC 51449 / 3B1).